A 1869-amino-acid chain; its full sequence is Chitin synthase csm1 (1869 aa).

Residues 1–778 (MAQHRCVGGN…CWMEIAQLSD (778 aa)) enclose the Myosin motor domain. Residue 103 to 110 (GESGSGKT) participates in ATP binding. N-linked (GlcNAc...) asparagine glycosylation is found at Asn-122, Asn-290, Asn-427, and Asn-558. Residues 579 to 653 (HPQERTTVMQ…KPSEEGASGQ (75 aa)) form a disordered region. The segment covering 583-593 (RTTVMQASVSS) has biased composition (polar residues). An actin-binding region spans residues 658–682 (LDNVTKSFHAQNTNAYFVFCLKPND). An N-linked (GlcNAc...) asparagine glycan is attached at Asn-660. Transmembrane regions (helical) follow at residues 880–900 (WVFITWMLTFFVPEFLIQHLG) and 919–939 (FIIWFSCLAAAFILVVFPMLV). Asn-1029, Asn-1054, and Asn-1120 each carry an N-linked (GlcNAc...) asparagine glycan. Residues 1191–1211 (FILAVTIILCSIIAFKFFAAL) form a helical membrane-spanning segment. 2 N-linked (GlcNAc...) asparagine glycosylation sites follow: Asn-1448 and Asn-1554. Helical transmembrane passes span 1579-1599 (FIVFIDLLSTIIQPFTIAYIV), 1612-1632 (VPVLAFVLLAAVYGLQAIIFI), and 1639-1659 (MIAWMILYIIAMPIFSFGLPL). One can recognise a DEK-C domain in the interval 1811 to 1866 (LPSDDALLAEIREILRTADLMTVTKKGVKQELERRFGVNLDSRRAYINSATEALLS).

In the N-terminal section; belongs to the TRAFAC class myosin-kinesin ATPase superfamily. Myosin family. This sequence in the C-terminal section; belongs to the chitin synthase family. Class V subfamily.

It localises to the cell membrane. It is found in the cell septum. The protein resides in the cell tip. It catalyses the reaction [(1-&gt;4)-N-acetyl-beta-D-glucosaminyl](n) + UDP-N-acetyl-alpha-D-glucosamine = [(1-&gt;4)-N-acetyl-beta-D-glucosaminyl](n+1) + UDP + H(+). Functionally, polymerizes chitin, a structural polymer of the cell wall and septum, by transferring the sugar moiety of UDP-GlcNAc to the non-reducing end of the growing chitin polymer. Involved in mycelial growth. This Pyricularia grisea (Crabgrass-specific blast fungus) protein is Chitin synthase csm1.